The sequence spans 393 residues: NAD(P)H-quinone oxidoreductase subunit H, chloroplastic (393 aa).

Belongs to the complex I 49 kDa subunit family. As to quaternary structure, NDH is composed of at least 16 different subunits, 5 of which are encoded in the nucleus.

The protein localises to the plastid. Its subcellular location is the chloroplast thylakoid membrane. The catalysed reaction is a plastoquinone + NADH + (n+1) H(+)(in) = a plastoquinol + NAD(+) + n H(+)(out). The enzyme catalyses a plastoquinone + NADPH + (n+1) H(+)(in) = a plastoquinol + NADP(+) + n H(+)(out). Functionally, NDH shuttles electrons from NAD(P)H:plastoquinone, via FMN and iron-sulfur (Fe-S) centers, to quinones in the photosynthetic chain and possibly in a chloroplast respiratory chain. The immediate electron acceptor for the enzyme in this species is believed to be plastoquinone. Couples the redox reaction to proton translocation, and thus conserves the redox energy in a proton gradient. The sequence is that of NAD(P)H-quinone oxidoreductase subunit H, chloroplastic from Manihot esculenta (Cassava).